Here is an 807-residue protein sequence, read N- to C-terminus: AP-5 complex subunit zeta-1 (807 aa).

As to quaternary structure, probably part of the adaptor protein complex 5 (AP-5) a tetramer composed of AP5B1, AP5M1, AP5S1 and AP5Z1. Interacts with ZFYVE26 and SPG11.

The protein localises to the cytoplasm. Its subcellular location is the nucleus. As part of AP-5, a probable fifth adaptor protein complex it may be involved in endosomal transport. The polypeptide is AP-5 complex subunit zeta-1 (Ap5z1) (Mus musculus (Mouse)).